Consider the following 473-residue polypeptide: FAD-dependent monooxygenase ctvC (473 aa).

FAD is bound by residues Glu-37, Ala-51, and Arg-110. Residues 218–238 (IGPGFTFLIFPAAGDSLFWVL) form a helical membrane-spanning segment. 2 residues coordinate FAD: Asp-310 and Ala-323. A glycan (N-linked (GlcNAc...) asparagine) is linked at Asn-358. Residues 451–471 (LVYCFGVVILLWISWAVFNVN) form a helical membrane-spanning segment.

The protein belongs to the paxM FAD-dependent monooxygenase family. It depends on FAD as a cofactor.

It localises to the membrane. It participates in mycotoxin biosynthesis. Functionally, FAD-dependent monooxygenase; part of the gene cluster that mediates the biosynthesis of citreoviridin, an inhibitor of the of F1-ATPase beta-subunit. The HR-PKS ctvA accepts acetyl-CoA as the starter unit and catalyzes eight iterations of malonyl-CoA extension and four iterations of SAM-dependent methylation at C4, C12, C14, and C16. The KR and DH domains selectively act on the first six iterations to generate the hexaene chain. In the last three iterations, the KR and DH domains terminate their functions to yield a beta,delta-diketo ester moiety, which then undergoes intramolecular cyclization to yield an alpha-pyrone intermediate. Subsequently, ctvB methylates the alpha-pyrone hydroxyl group to generate citreomontanin. In order to form the tetrahydrofuran ring with the correct stereochemistry, the terminal alkenes of citreomontanin need to undergo isomerization to yield a (17Z)-hexaene, a step that could be catalyzed by ctvC. The (17Z)-hexaene then undergoes bisepoxidation by ctvC to form a (17R,16R,15S,14R)-bisepoxide moiety. Lastly, ctvD acts as a regioselective hydrolase to form the tetrahydrofuran ring with the substituents in the correct absolute configuration, completing the biosynthesis of citreoviridin. This chain is FAD-dependent monooxygenase ctvC, found in Aspergillus terreus (strain NIH 2624 / FGSC A1156).